The primary structure comprises 243 residues: MLFALPALNDNYIWLYQRENLPLIIVDLPETDKLFAWLDKQNATVEAVLLTHEHDDHTQGVSAFKKRYPTVPIYGPQECEKKGATQIVNEGKILTANYQIDVIPTGGHTKQHVSFLVDNHLFCGDALFSAGCGRVFTGNYALMFEGLQRLNTLPDETIVCPAHEYTLGNLAFAETVLVDKSAVEKSAVEKSAVEKQRIFVETQRAENKPSLPTTLKLEREINPFLQAKTLEEFTALRKAKDIF.

7 residues coordinate Zn(2+): H52, H54, D56, H57, H108, D125, and H163.

Belongs to the metallo-beta-lactamase superfamily. Glyoxalase II family. In terms of assembly, monomer. Zn(2+) serves as cofactor.

It catalyses the reaction an S-(2-hydroxyacyl)glutathione + H2O = a 2-hydroxy carboxylate + glutathione + H(+). The protein operates within secondary metabolite metabolism; methylglyoxal degradation; (R)-lactate from methylglyoxal: step 2/2. Functionally, thiolesterase that catalyzes the hydrolysis of S-D-lactoyl-glutathione to form glutathione and D-lactic acid. This is Hydroxyacylglutathione hydrolase from Haemophilus influenzae (strain PittGG).